The chain runs to 121 residues: Large ribosomal subunit protein bL20 (121 aa).

The protein belongs to the bacterial ribosomal protein bL20 family.

Its function is as follows. Binds directly to 23S ribosomal RNA and is necessary for the in vitro assembly process of the 50S ribosomal subunit. It is not involved in the protein synthesizing functions of that subunit. The protein is Large ribosomal subunit protein bL20 of Dinoroseobacter shibae (strain DSM 16493 / NCIMB 14021 / DFL 12).